The primary structure comprises 130 residues: Sirohydrochlorin cobaltochelatase (130 aa).

Residue His12 is the Proton acceptor of the active site. His12 contributes to the Co(2+) binding site. His12 is a Ni(2+) binding site. Substrate is bound by residues Glu48 and 73 to 78 (LASGVH). His78 lines the Co(2+) pocket. His78 contributes to the Ni(2+) binding site.

Belongs to the CbiX family. CbiXS subfamily. In terms of assembly, homotetramer; dimer of dimers.

It carries out the reaction Co-sirohydrochlorin + 2 H(+) = sirohydrochlorin + Co(2+). The enzyme catalyses Ni-sirohydrochlorin + 2 H(+) = sirohydrochlorin + Ni(2+). The protein operates within cofactor biosynthesis; adenosylcobalamin biosynthesis; cob(II)yrinate a,c-diamide from sirohydrochlorin (anaerobic route): step 1/10. Functionally, catalyzes the insertion of Co(2+) into sirohydrochlorin as part of the anaerobic pathway to cobalamin biosynthesis (Potential). Involved in the biosynthesis of the unique nickel-containing tetrapyrrole coenzyme F430, the prosthetic group of methyl-coenzyme M reductase (MCR), which plays a key role in methanogenesis and anaerobic methane oxidation. Catalyzes the insertion of Ni(2+) into sirohydrochlorin to yield Ni-sirohydrochlorin. The sequence is that of Sirohydrochlorin cobaltochelatase from Methanosarcina acetivorans (strain ATCC 35395 / DSM 2834 / JCM 12185 / C2A).